A 449-amino-acid chain; its full sequence is Hyaluronidase-4 (449 aa).

The first 23 residues, 1–23, serve as a signal peptide directing secretion; it reads MYHIWIKFLAAWIFLKRFNGVHV. Intrachain disulfides connect Cys-47/Cys-340 and Cys-211/Cys-227. N-linked (GlcNAc...) asparagine glycosylation is found at Asn-67, Asn-103, and Asn-111. Glu-135 functions as the Proton donor in the catalytic mechanism. Asn-153 carries an N-linked (GlcNAc...) asparagine glycan. N-linked (GlcNAc...) asparagine glycosylation is present at Asn-357. Intrachain disulfides connect Cys-365–Cys-376, Cys-370–Cys-427, and Cys-429–Cys-438. N-linked (GlcNAc...) asparagine glycosylation is present at Asn-401. The region spanning 427–438 is the EGF-like domain; it reads CQCYQGWKGLYC.

Belongs to the glycosyl hydrolase 56 family. Monomer. In terms of tissue distribution, expressed by the venom gland.

Its subcellular location is the secreted. It catalyses the reaction Random hydrolysis of (1-&gt;4)-linkages between N-acetyl-beta-D-glucosamine and D-glucuronate residues in hyaluronate.. In terms of biological role, snake venom endo-hyaluronidase that degrades hyaluronan to smaller oligosaccharide fragments. In venom, it is not toxic by itself, but increases the diffusion of other venom proteins by degrading the extracellular matrix. In addition, it displays antiedematogenic activity. This is Hyaluronidase-4 from Cerastes cerastes (Horned desert viper).